Reading from the N-terminus, the 170-residue chain is Photosystem II extrinsic protein V (170 aa).

Residues Met1–Ala34 form the signal peptide. Cys70, Cys73, His74, and His125 together coordinate heme c.

The protein belongs to the cytochrome c family. PsbV subfamily. As to quaternary structure, PSII is composed of 1 copy each of membrane proteins PsbA, PsbB, PsbC, PsbD, PsbE, PsbF, PsbH, PsbI, PsbJ, PsbK, PsbL, PsbM, PsbT, PsbX, PsbY, PsbZ, Psb30/Ycf12, peripheral proteins PsbO, CyanoQ (PsbQ), PsbU, PsbV and a large number of cofactors. It forms dimeric complexes. The cofactor is heme c.

The protein resides in the cellular thylakoid membrane. One of the extrinsic, lumenal subunits of photosystem II (PSII). PSII is a light-driven water plastoquinone oxidoreductase, using light energy to abstract electrons from H(2)O, generating a proton gradient subsequently used for ATP formation. The extrinsic proteins stabilize the structure of photosystem II oxygen-evolving complex (OEC), the ion environment of oxygen evolution and protect the OEC against heat-induced inactivation. Low-potential cytochrome c that plays a role in the OEC of PSII. This chain is Photosystem II extrinsic protein V, found in Picosynechococcus sp. (strain ATCC 27264 / PCC 7002 / PR-6) (Agmenellum quadruplicatum).